Here is a 314-residue protein sequence, read N- to C-terminus: Palmitoyl-protein thioesterase 1 (314 aa).

An N-terminal signal peptide occupies residues 1–25; that stretch reads MISICCSRFSCILFLLFLIFSLVLS. Disulfide bonds link C53–C54, C104–C136, and C160–C168. The Nucleophile role is filled by S123. N-linked (GlcNAc...) asparagine glycosylation occurs at N240. Residues D241 and H295 contribute to the active site.

It belongs to the palmitoyl-protein thioesterase family. In terms of tissue distribution, ubiquitously expressed.

The protein localises to the lysosome. It carries out the reaction S-hexadecanoyl-L-cysteinyl-[protein] + H2O = L-cysteinyl-[protein] + hexadecanoate + H(+). In terms of biological role, cleaves thioester-linked long fatty acyl groups such as palmitate from modified cysteine residues in proteins or peptides. The chain is Palmitoyl-protein thioesterase 1 (Ppt1) from Drosophila melanogaster (Fruit fly).